Consider the following 205-residue polypeptide: Recombination protein RecR (205 aa).

The segment at 59-74 (CAMCNTFCEGGLCDIC) adopts a C4-type zinc-finger fold. A Toprim domain is found at 82–177 (RRLMVVHMPA…KVSRLSQGIP (96 aa)).

It belongs to the RecR family.

In terms of biological role, may play a role in DNA repair. It seems to be involved in an RecBC-independent recombinational process of DNA repair. It may act with RecF and RecO. In Neisseria meningitidis serogroup C (strain 053442), this protein is Recombination protein RecR.